We begin with the raw amino-acid sequence, 625 residues long: tRNA uridine 5-carboxymethylaminomethyl modification enzyme MnmG (625 aa).

FAD is bound by residues Gly10–Gly15, Val122, and Ser177. Gly271–Phe285 serves as a coordination point for NAD(+). Position 368 (Gln368) interacts with FAD.

It belongs to the MnmG family. As to quaternary structure, homodimer. Heterotetramer of two MnmE and two MnmG subunits. Requires FAD as cofactor.

The protein localises to the cytoplasm. NAD-binding protein involved in the addition of a carboxymethylaminomethyl (cmnm) group at the wobble position (U34) of certain tRNAs, forming tRNA-cmnm(5)s(2)U34. The sequence is that of tRNA uridine 5-carboxymethylaminomethyl modification enzyme MnmG from Wolinella succinogenes (strain ATCC 29543 / DSM 1740 / CCUG 13145 / JCM 31913 / LMG 7466 / NCTC 11488 / FDC 602W) (Vibrio succinogenes).